Reading from the N-terminus, the 240-residue chain is Large ribosomal subunit protein uL1 (240 aa).

Belongs to the universal ribosomal protein uL1 family. Part of the 50S ribosomal subunit.

In terms of biological role, binds directly to 23S rRNA. The L1 stalk is quite mobile in the ribosome, and is involved in E site tRNA release. Functionally, protein L1 is also a translational repressor protein, it controls the translation of the L11 operon by binding to its mRNA. This is Large ribosomal subunit protein uL1 from Streptomyces griseus subsp. griseus (strain JCM 4626 / CBS 651.72 / NBRC 13350 / KCC S-0626 / ISP 5235).